The sequence spans 241 residues: Lipoprotein MxiJ (241 aa).

Residues 1 to 17 (MIRYKGFILFLLLMLIG) form the signal peptide. C18 is lipidated: N-palmitoyl cysteine. Residue C18 is the site of S-diacylglycerol cysteine attachment.

Belongs to the YscJ lipoprotein family.

The protein localises to the cell outer membrane. Functionally, involved in the secretion of the Ipa antigens. The chain is Lipoprotein MxiJ (mxiJ) from Shigella sonnei.